A 296-amino-acid chain; its full sequence is Acetylglutamate kinase (296 aa).

Residues 67-68 (GG), Arg89, and Asn194 each bind substrate.

Belongs to the acetylglutamate kinase family. ArgB subfamily.

The protein resides in the cytoplasm. The enzyme catalyses N-acetyl-L-glutamate + ATP = N-acetyl-L-glutamyl 5-phosphate + ADP. The protein operates within amino-acid biosynthesis; L-arginine biosynthesis; N(2)-acetyl-L-ornithine from L-glutamate: step 2/4. Catalyzes the ATP-dependent phosphorylation of N-acetyl-L-glutamate. The sequence is that of Acetylglutamate kinase from Syntrophus aciditrophicus (strain SB).